The following is a 556-amino-acid chain: Oxygen-dependent choline dehydrogenase (556 aa).

4-33 (DYIIIGAGSAGNVLATRLTEDPNTSVLLLE) is an FAD binding site. His-473 (proton acceptor) is an active-site residue.

The protein belongs to the GMC oxidoreductase family. It depends on FAD as a cofactor.

The enzyme catalyses choline + A = betaine aldehyde + AH2. It catalyses the reaction betaine aldehyde + NAD(+) + H2O = glycine betaine + NADH + 2 H(+). Its pathway is amine and polyamine biosynthesis; betaine biosynthesis via choline pathway; betaine aldehyde from choline (cytochrome c reductase route): step 1/1. Its function is as follows. Involved in the biosynthesis of the osmoprotectant glycine betaine. Catalyzes the oxidation of choline to betaine aldehyde and betaine aldehyde to glycine betaine at the same rate. In Escherichia coli (strain K12 / DH10B), this protein is Oxygen-dependent choline dehydrogenase.